We begin with the raw amino-acid sequence, 321 residues long: PI-PLC X domain-containing protein 3 (321 aa).

In terms of domain architecture, PI-PLC X-box spans 22 to 197 (SMHSIPLTNL…DYQVLVFYHS (176 aa)). Residues His37 and His114 contribute to the active site.

In terms of tissue distribution, expressed at highest levels in heart. Also detected in kidney, lung, small intestine and colon. Expressed at very low levels, if any, in leukocytes, thymus and skeletal muscle.

It localises to the cytoplasm. In Homo sapiens (Human), this protein is PI-PLC X domain-containing protein 3 (PLCXD3).